The following is a 513-amino-acid chain: Zinc finger protein RFP (513 aa).

Residues 16-57 form an RING-type zinc finger; sequence CPVCLQYFAEPMMLDCGHNICCACLARCWGTAETNVSCPQCR. Zn(2+)-binding residues include cysteine 96, histidine 99, cysteine 118, and histidine 124. The segment at 96–127 adopts a B box-type zinc-finger fold; the sequence is CEKHREPLKLYCEEDQMPICVVCDRSREHRGH. 2 coiled-coil regions span residues 132 to 172 and 282 to 311; these read LEEA…AELL and QKCL…LREA. One can recognise a B30.2/SPRY domain in the interval 298 to 492; that stretch reads MQSDMEKIQE…SAAPLIICPM (195 aa).

It belongs to the TRIM/RBCC family. As to quaternary structure, homomultimerizes. Part of a complex consisting of TRIM27, USP7 and MAGEL2; directly interacts with USP7. Interacts with PML, EIF3S6, EPC1, CHD4 and EID1. Interacts with MAGED4, MAGEF1 and MAGEL2. Interacts with PTPN11. Interacts with autophagy receptor p62/SQSTM1. In terms of assembly, (Microbial infection) Interacts with M.tuberculosis PtpA, whick blocks TRIM27-promoted JNK/p38 MAPK pathway activation and cell apoptosis. (Microbial infection) Interacts with herpes simplex virus protein ICP0. As to expression, expressed in testis namely within the seminiferous tubules.

It localises to the nucleus. Its subcellular location is the cytoplasm. The protein resides in the PML body. It is found in the early endosome. The protein localises to the mitochondrion. It catalyses the reaction S-ubiquitinyl-[E2 ubiquitin-conjugating enzyme]-L-cysteine + [acceptor protein]-L-lysine = [E2 ubiquitin-conjugating enzyme]-L-cysteine + N(6)-ubiquitinyl-[acceptor protein]-L-lysine.. The protein operates within protein modification; protein ubiquitination. Its function is as follows. E3 ubiquitin-protein ligase that mediates ubiquitination of various substrates and thereby plays a role in diffent processes including proliferation, innate immunity, apoptosis, immune response or autophagy. Ubiquitinates PIK3C2B and inhibits its activity by mediating the formation of 'Lys-48'-linked polyubiquitin chains; the function inhibits CD4 T-cell activation. Acts as a regulator of retrograde transport: together with MAGEL2, mediates the formation of 'Lys-63'-linked polyubiquitin chains at 'Lys-220' of WASHC1, leading to promote endosomal F-actin assembly. Has a transcriptional repressor activity by cooperating with EPC1. Induces apoptosis by activating Jun N-terminal kinase and p38 kinase and also increases caspase-3-like activity independently of mitochondrial events. May function in male germ cell development. Has DNA-binding activity and preferentially bound to double-stranded DNA. Forms a complex with and ubiquitinates the ubiquitin-specific protease USP7, which in turn deubiquitinates RIPK1 resulting in the positive regulation of TNF-alpha-induced apoptosis. In addition, acts with USP7 or PTPN11 as an inhibitor of the antiviral signaling pathway by promoting kinase TBK1 ubiquitination and degradation. Acts as a negative regulator of NOD2 signaling by mediating ubiquitination of NOD2, promoting its degradation by the proteasome. Alternatively, facilitates mitophagy via stabilization of active TBK1. Negatively regulates autophagy flux under basal conditions by directly polyubiquitinating ULK1. During starvation-induced autophagy, catalyzes non-degradative ubiquitination of the kinase STK38L promoting its activation and phosphorylation of ULK1 leading to its ubiquitination and degradation to restrain the amplitude and duration of autophagy. In terms of biological role, (Microbial infection) Positively regulates hepatitis C virus replication by suppressing type I IFN response during infection. This chain is Zinc finger protein RFP, found in Homo sapiens (Human).